The chain runs to 431 residues: Glucose-1-phosphate adenylyltransferase (431 aa).

Lysine 39 serves as a coordination point for beta-D-fructose 1,6-bisphosphate. AMP contacts are provided by arginine 40, histidine 46, and arginine 52. Tyrosine 114 contributes to the alpha-D-glucose 1-phosphate binding site. Arginine 130 contributes to the AMP binding site. Alpha-D-glucose 1-phosphate contacts are provided by residues glycine 179, 194–195, and serine 212; that span reads EK. The AMP site is built by glutamate 370 and arginine 386. Beta-D-fructose 1,6-bisphosphate-binding positions include 419–423 and 429–431; these read REMLR and QER.

The protein belongs to the bacterial/plant glucose-1-phosphate adenylyltransferase family. In terms of assembly, homotetramer.

The catalysed reaction is alpha-D-glucose 1-phosphate + ATP + H(+) = ADP-alpha-D-glucose + diphosphate. The protein operates within glycan biosynthesis; glycogen biosynthesis. Allosterically activated by fructose-1,6-bisphosphate (F16BP) and inhibited by AMP. Involved in the biosynthesis of ADP-glucose, a building block required for the elongation reactions to produce glycogen. Catalyzes the reaction between ATP and alpha-D-glucose 1-phosphate (G1P) to produce pyrophosphate and ADP-Glc. In Escherichia fergusonii (strain ATCC 35469 / DSM 13698 / CCUG 18766 / IAM 14443 / JCM 21226 / LMG 7866 / NBRC 102419 / NCTC 12128 / CDC 0568-73), this protein is Glucose-1-phosphate adenylyltransferase.